A 67-amino-acid polypeptide reads, in one-letter code: Small ribosomal subunit protein eS17 (67 aa).

This sequence belongs to the eukaryotic ribosomal protein eS17 family. Part of the 30S ribosomal subunit.

The chain is Small ribosomal subunit protein eS17 from Pyrococcus furiosus (strain ATCC 43587 / DSM 3638 / JCM 8422 / Vc1).